Consider the following 484-residue polypeptide: Protein nucleotidyltransferase YdiU (484 aa).

Residues glycine 81, glycine 83, arginine 84, lysine 103, aspartate 115, glycine 116, arginine 166, and arginine 173 each contribute to the ATP site. Catalysis depends on aspartate 244, which acts as the Proton acceptor. Mg(2+)-binding residues include asparagine 245 and aspartate 254. Position 254 (aspartate 254) interacts with ATP.

This sequence belongs to the SELO family. Requires Mg(2+) as cofactor. Mn(2+) is required as a cofactor.

It catalyses the reaction L-seryl-[protein] + ATP = 3-O-(5'-adenylyl)-L-seryl-[protein] + diphosphate. The enzyme catalyses L-threonyl-[protein] + ATP = 3-O-(5'-adenylyl)-L-threonyl-[protein] + diphosphate. It carries out the reaction L-tyrosyl-[protein] + ATP = O-(5'-adenylyl)-L-tyrosyl-[protein] + diphosphate. The catalysed reaction is L-histidyl-[protein] + UTP = N(tele)-(5'-uridylyl)-L-histidyl-[protein] + diphosphate. It catalyses the reaction L-seryl-[protein] + UTP = O-(5'-uridylyl)-L-seryl-[protein] + diphosphate. The enzyme catalyses L-tyrosyl-[protein] + UTP = O-(5'-uridylyl)-L-tyrosyl-[protein] + diphosphate. Nucleotidyltransferase involved in the post-translational modification of proteins. It can catalyze the addition of adenosine monophosphate (AMP) or uridine monophosphate (UMP) to a protein, resulting in modifications known as AMPylation and UMPylation. In Shewanella sp. (strain MR-7), this protein is Protein nucleotidyltransferase YdiU.